A 134-amino-acid chain; its full sequence is Small ribosomal subunit protein bS6 (134 aa).

Positions 100 to 134 (SFLARDETDRRERSEETAEGEGEPDHSANEAVVTA) are disordered. Basic and acidic residues predominate over residues 103–115 (ARDETDRRERSEE).

This sequence belongs to the bacterial ribosomal protein bS6 family.

Binds together with bS18 to 16S ribosomal RNA. The polypeptide is Small ribosomal subunit protein bS6 (Acidithiobacillus ferrooxidans (strain ATCC 23270 / DSM 14882 / CIP 104768 / NCIMB 8455) (Ferrobacillus ferrooxidans (strain ATCC 23270))).